The primary structure comprises 196 residues: ATP-dependent Clp protease proteolytic subunit (196 aa).

Serine 101 functions as the Nucleophile in the catalytic mechanism. The active site involves histidine 126.

Belongs to the peptidase S14 family. As to quaternary structure, component of the chloroplastic Clp protease core complex.

It is found in the plastid. The protein localises to the chloroplast stroma. The enzyme catalyses Hydrolysis of proteins to small peptides in the presence of ATP and magnesium. alpha-casein is the usual test substrate. In the absence of ATP, only oligopeptides shorter than five residues are hydrolyzed (such as succinyl-Leu-Tyr-|-NHMec, and Leu-Tyr-Leu-|-Tyr-Trp, in which cleavage of the -Tyr-|-Leu- and -Tyr-|-Trp bonds also occurs).. Functionally, cleaves peptides in various proteins in a process that requires ATP hydrolysis. Has a chymotrypsin-like activity. Plays a major role in the degradation of misfolded proteins. This Eucalyptus globulus subsp. globulus (Tasmanian blue gum) protein is ATP-dependent Clp protease proteolytic subunit.